A 366-amino-acid chain; its full sequence is Phospho-N-acetylmuramoyl-pentapeptide-transferase (366 aa).

A run of 10 helical transmembrane segments spans residues 27–47 (AALF…IASL), 71–91 (TPTM…LLWA), 93–113 (LSSI…AIGF), 138–158 (FVIA…AGAA), 174–194 (LMLN…VGAG), 205–225 (GLAI…AYLA), 245–265 (LAVI…FNAP), 268–288 (AIFM…TVAV), 297–317 (IIIG…VFWF), and 343–363 (QVVI…LSTL).

The protein belongs to the glycosyltransferase 4 family. MraY subfamily. The cofactor is Mg(2+).

It localises to the cell inner membrane. The enzyme catalyses UDP-N-acetyl-alpha-D-muramoyl-L-alanyl-gamma-D-glutamyl-meso-2,6-diaminopimeloyl-D-alanyl-D-alanine + di-trans,octa-cis-undecaprenyl phosphate = di-trans,octa-cis-undecaprenyl diphospho-N-acetyl-alpha-D-muramoyl-L-alanyl-D-glutamyl-meso-2,6-diaminopimeloyl-D-alanyl-D-alanine + UMP. Its pathway is cell wall biogenesis; peptidoglycan biosynthesis. Catalyzes the initial step of the lipid cycle reactions in the biosynthesis of the cell wall peptidoglycan: transfers peptidoglycan precursor phospho-MurNAc-pentapeptide from UDP-MurNAc-pentapeptide onto the lipid carrier undecaprenyl phosphate, yielding undecaprenyl-pyrophosphoryl-MurNAc-pentapeptide, known as lipid I. The sequence is that of Phospho-N-acetylmuramoyl-pentapeptide-transferase from Rhizobium meliloti (strain 1021) (Ensifer meliloti).